The sequence spans 213 residues: Na(+)-translocating NADH-quinone reductase subunit D (213 aa).

Helical transmembrane passes span L22 to L42, T43 to R63, I77 to I97, L101 to M121, F131 to I151, and L183 to V203.

The protein belongs to the NqrDE/RnfAE family. Composed of six subunits; NqrA, NqrB, NqrC, NqrD, NqrE and NqrF.

The protein resides in the cell inner membrane. The catalysed reaction is a ubiquinone + n Na(+)(in) + NADH + H(+) = a ubiquinol + n Na(+)(out) + NAD(+). In terms of biological role, NQR complex catalyzes the reduction of ubiquinone-1 to ubiquinol by two successive reactions, coupled with the transport of Na(+) ions from the cytoplasm to the periplasm. NqrA to NqrE are probably involved in the second step, the conversion of ubisemiquinone to ubiquinol. This chain is Na(+)-translocating NADH-quinone reductase subunit D, found in Chlamydia trachomatis serovar L2 (strain ATCC VR-902B / DSM 19102 / 434/Bu).